Here is a 642-residue protein sequence, read N- to C-terminus: Threonine--tRNA ligase (642 aa).

Residues 1-61 (MPIITLPDGS…EEDASLEIIT (61 aa)) form the TGS domain. Positions 244–535 (DHRKIGKQLD…LIEEYAGFFP (292 aa)) are catalytic. Positions 335, 386, and 512 each coordinate Zn(2+).

Belongs to the class-II aminoacyl-tRNA synthetase family. In terms of assembly, homodimer. Zn(2+) serves as cofactor.

It localises to the cytoplasm. The catalysed reaction is tRNA(Thr) + L-threonine + ATP = L-threonyl-tRNA(Thr) + AMP + diphosphate + H(+). Its function is as follows. Catalyzes the attachment of threonine to tRNA(Thr) in a two-step reaction: L-threonine is first activated by ATP to form Thr-AMP and then transferred to the acceptor end of tRNA(Thr). Also edits incorrectly charged L-seryl-tRNA(Thr). This Vibrio vulnificus (strain CMCP6) protein is Threonine--tRNA ligase.